Reading from the N-terminus, the 1265-residue chain is 1-phosphatidylinositol 4,5-bisphosphate phosphodiesterase gamma-2 (1265 aa).

Residues 20-131 (RALELGTVMT…WLSGLKILHQ (112 aa)) form the PH domain. The PI-PLC X-box domain maps to 312–456 (QDMNNPLSHY…LREKIIIKHK (145 aa)). Catalysis depends on residues His327 and His372. 2 SH2 domains span residues 532–635 (WFHK…TDPV) and 646–735 (WYYD…RYPV). Phosphotyrosine; by BTK occurs at positions 753 and 759. The SH3 domain maps to 769–829 (MPQRTVKALY…PSNYVEDISA (61 aa)). The PI-PLC Y-box domain occupies 930–1044 (LSDLVVYCKP…GYVLQPESMR (115 aa)). The C2 domain occupies 1038–1169 (LQPESMRSEK…SGFRSVPLKN (132 aa)). A Phosphotyrosine; by BTK modification is found at Tyr1197. Tyr1217 and Tyr1245 each carry phosphotyrosine.

In terms of assembly, part of a complex composed of EEIG1, TNFRSF11A/RANK, PLCG2, GAB2, TEC and BTK; complex formation increases in the presence of TNFSF11/RANKL. Interacts (via SH2 domain) with CSF1R (tyrosine phosphorylated). Interacts constitutively with THEMIS2. Ca(2+) is required as a cofactor. In terms of processing, phosphorylated on tyrosine residues by CSF1R. Phosphorylated on tyrosine residues by BTK and SYK; upon ligand-induced activation of a variety of growth factor receptors and immune system receptors. Phosphorylation leads to increased phospholipase activity.

It is found in the membrane raft. The enzyme catalyses a 1,2-diacyl-sn-glycero-3-phospho-(1D-myo-inositol-4,5-bisphosphate) + H2O = 1D-myo-inositol 1,4,5-trisphosphate + a 1,2-diacyl-sn-glycerol + H(+). Its function is as follows. The production of the second messenger molecules diacylglycerol (DAG) and inositol 1,4,5-trisphosphate (IP3) is mediated by activated phosphatidylinositol-specific phospholipase C enzymes. It is a crucial enzyme in transmembrane signaling. This is 1-phosphatidylinositol 4,5-bisphosphate phosphodiesterase gamma-2 from Rattus norvegicus (Rat).